The sequence spans 972 residues: POM121-like protein 2 (972 aa).

Disordered stretches follow at residues 1 to 67 (MGSY…PANP), 281 to 302 (LKKA…SGQL), 328 to 359 (TEED…IPEM), 406 to 431 (GISS…PVTD), 676 to 726 (LGLS…AIDG), and 953 to 972 (SKTL…TYKK). Residues 40–57 (RVQHVHRAQPARRHRPAR) show a composition bias toward basic residues. 2 stretches are compositionally biased toward polar residues: residues 287–302 (SPNS…SGQL) and 339–352 (VPSN…TGTA). Residues 413 to 431 (PSIASTQASPSSPTTPVTD) show a composition bias toward low complexity. Over residues 677 to 696 (GLSSTNQPPVTSSNSNVTSA) the composition is skewed to polar residues. Low complexity predominate over residues 697–706 (LTSSLGSSPK).

This sequence belongs to the POM121 family.

This is POM121-like protein 2 (Pom121l2) from Mus musculus (Mouse).